The following is a 475-amino-acid chain: Exodeoxyribonuclease 7 large subunit (475 aa).

The protein belongs to the XseA family. Heterooligomer composed of large and small subunits.

The protein resides in the cytoplasm. The enzyme catalyses Exonucleolytic cleavage in either 5'- to 3'- or 3'- to 5'-direction to yield nucleoside 5'-phosphates.. In terms of biological role, bidirectionally degrades single-stranded DNA into large acid-insoluble oligonucleotides, which are then degraded further into small acid-soluble oligonucleotides. This chain is Exodeoxyribonuclease 7 large subunit, found in Bartonella henselae (strain ATCC 49882 / DSM 28221 / CCUG 30454 / Houston 1) (Rochalimaea henselae).